The chain runs to 521 residues: Probable rhamnogalacturonase B (521 aa).

Positions 1-21 are cleaved as a signal peptide; sequence MRLHAFTLLSLLGLVPSFAAA. Residues Cys42 and Cys68 are joined by a disulfide bond. N-linked (GlcNAc...) asparagine glycosylation occurs at Asn145. Residue Asp219 is the Proton donor of the active site. Residues Cys221 and Cys238 are joined by a disulfide bond. An N-linked (GlcNAc...) asparagine glycan is attached at Asn239. His294 is a catalytic residue. Asn321 is a glycosylation site (N-linked (GlcNAc...) asparagine). Cystine bridges form between Cys344–Cys350 and Cys372–Cys381. Positions 462–521 are disordered; sequence ETPAAASRSEQVVQGAPQETGQSAPESAGPVPSGNPGPVPTGGSRPSRHRHGHHHFGSAI. Positions 469–486 are enriched in polar residues; it reads RSEQVVQGAPQETGQSAP. Residues 507 to 521 are compositionally biased toward basic residues; sequence PSRHRHGHHHFGSAI.

Belongs to the glycosyl hydrolase 28 family.

Its subcellular location is the secreted. It catalyses the reaction Endohydrolysis of alpha-D-GalA-(1-&gt;2)-alpha-L-Rha glycosidic bond in the rhamnogalacturonan I backbone with initial inversion of anomeric configuration releasing oligosaccharides with beta-D-GalA at the reducing end.. Its function is as follows. Pectinolytic enzymes consist of four classes of enzymes: pectine lyase, polygalacturonase, pectin methylesterase and rhamnogalacturonase. Hydrolyzes alpha-D-galacturonopyranosyl-(1,2)-alpha-L-rhamnopyranosyl linkages in the backbone of the hairy regions of pectins. This is Probable rhamnogalacturonase B (rhgB) from Aspergillus fumigatus (strain ATCC MYA-4609 / CBS 101355 / FGSC A1100 / Af293) (Neosartorya fumigata).